Reading from the N-terminus, the 387-residue chain is Probable tRNA sulfurtransferase (387 aa).

Residues 67-167 (SLLKNLFTRL…KEHFLIISES (101 aa)) form the THUMP domain. Residues 185-186 (LL), 210-211 (TF), arginine 269, glycine 287, and glutamine 296 contribute to the ATP site.

This sequence belongs to the ThiI family.

The protein resides in the cytoplasm. The catalysed reaction is [ThiI sulfur-carrier protein]-S-sulfanyl-L-cysteine + a uridine in tRNA + 2 reduced [2Fe-2S]-[ferredoxin] + ATP + H(+) = [ThiI sulfur-carrier protein]-L-cysteine + a 4-thiouridine in tRNA + 2 oxidized [2Fe-2S]-[ferredoxin] + AMP + diphosphate. The enzyme catalyses [ThiS sulfur-carrier protein]-C-terminal Gly-Gly-AMP + S-sulfanyl-L-cysteinyl-[cysteine desulfurase] + AH2 = [ThiS sulfur-carrier protein]-C-terminal-Gly-aminoethanethioate + L-cysteinyl-[cysteine desulfurase] + A + AMP + 2 H(+). The protein operates within cofactor biosynthesis; thiamine diphosphate biosynthesis. Its function is as follows. Catalyzes the ATP-dependent transfer of a sulfur to tRNA to produce 4-thiouridine in position 8 of tRNAs, which functions as a near-UV photosensor. Also catalyzes the transfer of sulfur to the sulfur carrier protein ThiS, forming ThiS-thiocarboxylate. This is a step in the synthesis of thiazole, in the thiamine biosynthesis pathway. The sulfur is donated as persulfide by IscS. In Mycoplasma pneumoniae (strain ATCC 29342 / M129 / Subtype 1) (Mycoplasmoides pneumoniae), this protein is Probable tRNA sulfurtransferase.